The primary structure comprises 388 residues: Succinate--CoA ligase [ADP-forming] subunit beta (388 aa).

In terms of domain architecture, ATP-grasp spans 9 to 244 (KQLFARYGLP…QSQEDPREAQ (236 aa)). ATP is bound by residues lysine 46, 53-55 (GRG), glutamate 99, threonine 102, and glutamate 107. The Mg(2+) site is built by asparagine 199 and aspartate 213. Substrate contacts are provided by residues asparagine 264 and 321-323 (GIV).

This sequence belongs to the succinate/malate CoA ligase beta subunit family. Heterotetramer of two alpha and two beta subunits. The cofactor is Mg(2+).

It catalyses the reaction succinate + ATP + CoA = succinyl-CoA + ADP + phosphate. The catalysed reaction is GTP + succinate + CoA = succinyl-CoA + GDP + phosphate. It functions in the pathway carbohydrate metabolism; tricarboxylic acid cycle; succinate from succinyl-CoA (ligase route): step 1/1. Functionally, succinyl-CoA synthetase functions in the citric acid cycle (TCA), coupling the hydrolysis of succinyl-CoA to the synthesis of either ATP or GTP and thus represents the only step of substrate-level phosphorylation in the TCA. The beta subunit provides nucleotide specificity of the enzyme and binds the substrate succinate, while the binding sites for coenzyme A and phosphate are found in the alpha subunit. This Klebsiella pneumoniae (strain 342) protein is Succinate--CoA ligase [ADP-forming] subunit beta.